The sequence spans 420 residues: UDP-N-acetylglucosamine 1-carboxyvinyltransferase 1 (420 aa).

22-23 serves as a coordination point for phosphoenolpyruvate; it reads KN. UDP-N-acetyl-alpha-D-glucosamine is bound at residue arginine 91. The active-site Proton donor is the cysteine 115. Cysteine 115 carries the post-translational modification 2-(S-cysteinyl)pyruvic acid O-phosphothioketal. Residues 120-124, aspartate 303, and valine 325 each bind UDP-N-acetyl-alpha-D-glucosamine; that span reads RPMDL.

It belongs to the EPSP synthase family. MurA subfamily.

It is found in the cytoplasm. The enzyme catalyses phosphoenolpyruvate + UDP-N-acetyl-alpha-D-glucosamine = UDP-N-acetyl-3-O-(1-carboxyvinyl)-alpha-D-glucosamine + phosphate. Its pathway is cell wall biogenesis; peptidoglycan biosynthesis. Functionally, cell wall formation. Adds enolpyruvyl to UDP-N-acetylglucosamine. The sequence is that of UDP-N-acetylglucosamine 1-carboxyvinyltransferase 1 from Carboxydothermus hydrogenoformans (strain ATCC BAA-161 / DSM 6008 / Z-2901).